The chain runs to 102 residues: Urease subunit beta (102 aa).

Belongs to the urease beta subunit family. As to quaternary structure, heterotrimer of UreA (gamma), UreB (beta) and UreC (alpha) subunits. Three heterotrimers associate to form the active enzyme.

The protein localises to the cytoplasm. The catalysed reaction is urea + 2 H2O + H(+) = hydrogencarbonate + 2 NH4(+). It functions in the pathway nitrogen metabolism; urea degradation; CO(2) and NH(3) from urea (urease route): step 1/1. The chain is Urease subunit beta from Pseudomonas syringae pv. tomato (strain ATCC BAA-871 / DC3000).